The following is a 222-amino-acid chain: Putative thymidylate synthase (222 aa).

The active site involves Cys-139.

The protein belongs to the thymidylate synthase family. Archaeal-type ThyA subfamily. Monomer.

The protein resides in the cytoplasm. It participates in pyrimidine metabolism; dTTP biosynthesis. In terms of biological role, may catalyze the biosynthesis of dTMP using an unknown cosubstrate. This chain is Putative thymidylate synthase, found in Methanocaldococcus jannaschii (strain ATCC 43067 / DSM 2661 / JAL-1 / JCM 10045 / NBRC 100440) (Methanococcus jannaschii).